The primary structure comprises 517 residues: Golgi-associated kinase 1B (517 aa).

The Cytoplasmic segment spans residues 1–36; it reads MTCPDKPGQLVNWFVCSLCAPRVCKLWSSRRPRTRR. A helical; Signal-anchor for type II membrane protein membrane pass occupies residues 37–56; it reads NLLLGTACAIYLGFLVSQVG. Residues 57 to 517 lie on the Extracellular side of the membrane; sequence RGSFQHGQAT…HGARVLPMNE (461 aa). N-linked (GlcNAc...) asparagine glycosylation is found at N98 and N287.

This sequence belongs to the GASK family.

Its subcellular location is the golgi apparatus membrane. The chain is Golgi-associated kinase 1B from Mus musculus (Mouse).